The following is a 443-amino-acid chain: Serine/threonine-protein phosphatase 2A 55 kDa regulatory subunit B beta isoform (443 aa).

WD repeat units follow at residues 22-61, 87-128, 171-209, and 220-260; these read TEAD…KNQV, EIEE…KRPE, AHTY…QSFN, and ELTE…CVTG. A Phosphoserine modification is found at Ser-275. 3 WD repeats span residues 279 to 317, 334 to 375, and 410 to 442; these read KLSS…RPIE, ENDC…DVTL, and DFSK…QDKV. Thr-298 bears the Phosphothreonine mark.

This sequence belongs to the phosphatase 2A regulatory subunit B family. PP2A consists of a common heterodimeric core enzyme, composed of a 36 kDa catalytic subunit (subunit C) and a 65 kDa constant regulatory subunit (PR65 or subunit A), that associates with a variety of regulatory subunits. Proteins that associate with the core dimer include three families of regulatory subunits B (the R2/B/PR55/B55, R3/B''/PR72/PR130/PR59 and R5/B'/B56 families), the 48 kDa variable regulatory subunit, viral proteins, and cell signaling molecules. Interacts with TOMM22. Interacts with IER5 (via N- and C-terminal regions). As to expression, brain.

The protein localises to the cytoplasm. Its subcellular location is the cytoskeleton. It is found in the membrane. The B regulatory subunit might modulate substrate selectivity and catalytic activity, and might also direct the localization of the catalytic enzyme to a particular subcellular compartment. The chain is Serine/threonine-protein phosphatase 2A 55 kDa regulatory subunit B beta isoform (PPP2R2B) from Sus scrofa (Pig).